A 132-amino-acid chain; its full sequence is Small ribosomal subunit protein uS8 (132 aa).

It belongs to the universal ribosomal protein uS8 family. As to quaternary structure, part of the 30S ribosomal subunit. Contacts proteins S5 and S12.

One of the primary rRNA binding proteins, it binds directly to 16S rRNA central domain where it helps coordinate assembly of the platform of the 30S subunit. This is Small ribosomal subunit protein uS8 from Borrelia hermsii (strain HS1 / DAH).